Here is a 203-residue protein sequence, read N- to C-terminus: Putative phosphoserine phosphatase 2 (203 aa).

Histidine 9 acts as the Tele-phosphohistidine intermediate in catalysis. Residue histidine 149 is part of the active site.

It belongs to the histidine phosphatase superfamily. Metal-independent phosphoserine phosphatase family. As to quaternary structure, heterodimer with PspA. The PspB subunit appears to have no or considerably lower PSP activity compared with that of PspA.

It carries out the reaction O-phospho-L-serine + H2O = L-serine + phosphate. It catalyses the reaction O-phospho-D-serine + H2O = D-serine + phosphate. Its pathway is amino-acid biosynthesis; L-serine biosynthesis; L-serine from 3-phospho-D-glycerate: step 3/3. With respect to regulation, activity is not inhibited by EDTA in vitro, nor enhanced by the addition of Mg(2+). Part of a complex that catalyzes the dephosphorylation of L-phosphoserine to serine and inorganic phosphate. Is poorly or not active toward D-phosphoserine, DL-phosphothreonine, 3-phosphoglycerate, para-nitrophenylphosphate, and fructose-6-phosphate. Does not display phosphoglycerate mutase activity. The sequence is that of Putative phosphoserine phosphatase 2 (pspB) from Hydrogenobacter thermophilus (strain DSM 6534 / IAM 12695 / TK-6).